The following is a 328-amino-acid chain: MINIAIDAMGGDFGEKPIIEGVLKALEAKPFNAILVGNSKILKPLIPKKLEQYIQYEEANEIFSMNENATDALKNKETTIYKAINLLKEKKVDAVVSAGHSGASMSLATLRLGRLKGISRPAIATLMPNIVSKTLLLDVGANTDCKAENLFQFAIMGEVYAREIMQIQKPRLALLSNGEEECKGNELTKESHQLMKKIPNFIGNAEGRDIFNGEIDVLVCDGFDGNVILKACEGVATAIFQLLKNEVKRSFISKIGALLIKPSFKKLKKHTDWQEYGGAPLLGVNGCVIISHGKSDSRAIKNAIFQAVNFSQSHINELIENELGKYNA.

The protein belongs to the PlsX family. Homodimer. Probably interacts with PlsY.

The protein localises to the cytoplasm. The catalysed reaction is a fatty acyl-[ACP] + phosphate = an acyl phosphate + holo-[ACP]. The protein operates within lipid metabolism; phospholipid metabolism. Catalyzes the reversible formation of acyl-phosphate (acyl-PO(4)) from acyl-[acyl-carrier-protein] (acyl-ACP). This enzyme utilizes acyl-ACP as fatty acyl donor, but not acyl-CoA. The chain is Phosphate acyltransferase from Campylobacter jejuni subsp. doylei (strain ATCC BAA-1458 / RM4099 / 269.97).